The sequence spans 90 residues: Bombyxin D-1 (90 aa).

The first 18 residues, 1–18 (MKLLGFFLSWVSVCAIVS), serve as a signal peptide directing secretion. Disulfide bonds link cysteine 27–cysteine 77, cysteine 39–cysteine 90, and cysteine 76–cysteine 81. The propeptide at 48 to 68 (SVAHYAGYGWPLLPSLSEERG) is c peptide like.

It belongs to the insulin family. As to quaternary structure, heterodimer of a B chain and an A chain linked by two disulfide bonds.

It is found in the secreted. Its function is as follows. Brain peptide responsible for activation of prothoracic glands to produce ecdysone in insects. This chain is Bombyxin D-1 (BBXD1), found in Bombyx mori (Silk moth).